A 233-amino-acid polypeptide reads, in one-letter code: Large ribosomal subunit protein uL1 (233 aa).

This sequence belongs to the universal ribosomal protein uL1 family. Part of the 50S ribosomal subunit.

Its function is as follows. Binds directly to 23S rRNA. The L1 stalk is quite mobile in the ribosome, and is involved in E site tRNA release. Functionally, protein L1 is also a translational repressor protein, it controls the translation of the L11 operon by binding to its mRNA. This chain is Large ribosomal subunit protein uL1, found in Trichlorobacter lovleyi (strain ATCC BAA-1151 / DSM 17278 / SZ) (Geobacter lovleyi).